The following is a 241-amino-acid chain: MDVSWDADNFEPKLPTTLAASNKWEGEDEDDNVKESWEDEEEEKKDEEKTEAAPPPQPKPKKKIHDKIAERERQEREKAERLVTEKTAEEMTPEQKLAEKLRQQKLQEESDLRLAMETFGVTEGNIGKLDNFHPTTKEEYTEFADLLTKKITFYKAKDEFPGFIDDLVKNILVQMSSADIRRIKLTVDNLYIEKQKAEKNDKTKKATKGKGKAKLKLEGDNAHLNQYESYGNFDDDYDDFI.

Positions 1–94 (MDVSWDADNF…EKTAEEMTPE (94 aa)) are disordered. Acidic residues predominate over residues 26–45 (GEDEDDNVKESWEDEEEEKK). The stretch at 61-118 (KKKIHDKIAERERQEREKAERLVTEKTAEEMTPEQKLAEKLRQQKLQEESDLRLAMET) forms a coiled coil. The span at 66–89 (DKIAERERQEREKAERLVTEKTAE) shows a compositional bias: basic and acidic residues.

Belongs to the eIF-3 subunit J family. In terms of assembly, component of the eukaryotic translation initiation factor 3 (eIF-3) complex.

It localises to the cytoplasm. In terms of biological role, component of the eukaryotic translation initiation factor 3 (eIF-3) complex, which is involved in protein synthesis of a specialized repertoire of mRNAs and, together with other initiation factors, stimulates binding of mRNA and methionyl-tRNAi to the 40S ribosome. The eIF-3 complex specifically targets and initiates translation of a subset of mRNAs involved in cell proliferation. This Bombyx mori (Silk moth) protein is Eukaryotic translation initiation factor 3 subunit J.